A 349-amino-acid chain; its full sequence is C-X-C chemokine receptor type 4 (349 aa).

An important for chemokine binding and signaling region spans residues 1 to 18; the sequence is MEIYTSDNYSEEVGSGDY. Positions 1–23 are disordered; sequence MEIYTSDNYSEEVGSGDYDSNKE. The Extracellular segment spans residues 1 to 35; that stretch reads MEIYTSDNYSEEVGSGDYDSNKEPCFRDENENFNR. N8 carries an N-linked (GlcNAc...) asparagine glycan. Sulfotyrosine is present on Y9. Residue S15 is glycosylated (O-linked (Xyl...) (chondroitin sulfate) serine). Y18 is subject to Sulfotyrosine. 2 cysteine pairs are disulfide-bonded: C25/C271 and C106/C183. Residues 36–60 traverse the membrane as a helical segment; sequence IFLPTIYFIIFLTGIVGNGLVILVM. Residues 61-74 lie on the Cytoplasmic side of the membrane; sequence GYQKKLRSMTDKYR. A helical transmembrane segment spans residues 75 to 96; sequence LHLSVADLLFVITLPFWAVDAM. The segment at 91–94 is chemokine binding; that stretch reads WAVD. Over 97-107 the chain is Extracellular; the sequence is ADWYFGKFLCK. The helical transmembrane segment at 108–127 threads the bilayer; sequence AVHIIYTVNLYSSVLILAFI. The tract at residues 110–114 is chemokine binding; that stretch reads HIIYT. The Cytoplasmic portion of the chain corresponds to 128–151; it reads SLDRYLAIVHATNSQRPRKLLAEK. Positions 130–132 match the Important for signaling motif; sequence DRY. The tract at residues 132 to 144 is involved in dimerization; when bound to chemokine; sequence YLAIVHATNSQRP. A helical membrane pass occupies residues 152 to 171; that stretch reads AVYVGVWIPALLLTIPDIIF. The Extracellular portion of the chain corresponds to 172–192; sequence ADVSQGDGRYICDRLYPDSLW. Residues 183–187 form a chemokine binding, important for signaling region; it reads CDRLY. Residues 188-207 form an involved in dimerization region; the sequence is PDSLWMVVFQFQHIMVGLIL. Residues 193–213 form a helical membrane-spanning segment; that stretch reads MVVFQFQHIMVGLILPGIVIL. Residues 214–238 lie on the Cytoplasmic side of the membrane; sequence SCYCIIISKLSHSKGHQKRKALKTT. A helical membrane pass occupies residues 239-258; sequence VILILAFFACWLPYYVGISI. Topologically, residues 259-279 are extracellular; the sequence is DSFILLEVIKQGCEFESVVHK. The involved in dimerization stretch occupies residues 263-265; that stretch reads LLE. The helical transmembrane segment at 280-299 threads the bilayer; it reads WISITEALAFFHCCLNPILY. The Cytoplasmic segment spans residues 300 to 349; sequence AFLGAKFKSSAQHALNSMSRGSSLKILSKGKRGGHSSVSTESESSSFHSS. Phosphoserine occurs at positions 316 and 318. S321 and S322 each carry phosphoserine; by PKC and GRK6. The interval 325-349 is disordered; the sequence is ILSKGKRGGHSSVSTESESSSFHSS. Position 327 is a phosphoserine; by GRK6 (S327). K328 participates in a covalent cross-link: Glycyl lysine isopeptide (Lys-Gly) (interchain with G-Cter in ubiquitin). A compositionally biased stretch (low complexity) spans 334-349; that stretch reads HSSVSTESESSSFHSS. Phosphoserine; by GRK6 is present on S336. Phosphoserine is present on residues S345 and S348.

This sequence belongs to the G-protein coupled receptor 1 family. Monomer. Can form homodimers. Interacts with CD164. Interacts with ARRB2; the interaction is dependent on the C-terminal phosphorylation of CXCR4 and allows activation of MAPK1 and MAPK3. Interacts with ARR3; the interaction is dependent on the C-terminal phosphorylation of CXCR4 and modulates calcium mobilization. Interacts with RNF113A; the interaction, enhanced by CXCL12, promotes CXCR4 ubiquitination and subsequent degradation. Interacts (via the cytoplasmic C-terminal) with ITCH (via the WW domains I and II); the interaction, enhanced by CXCL12, promotes CXCR4 ubiquitination and leads to its degradation. Interacts with extracellular ubiquitin. Interacts with DBN1; this interaction is enhanced by antigenic stimulation. Following LPS binding, may form a complex with GDF5, HSP90AA1 and HSPA8. Phosphorylated on agonist stimulation. Rapidly phosphorylated on serine and threonine residues in the C-terminal. Phosphorylation at Ser-321 and Ser-322 leads to recruitment of ITCH, ubiquitination and protein degradation. In terms of processing, ubiquitinated after ligand binding, leading to its degradation. Ubiquitinated by ITCH at the cell membrane on agonist stimulation. The ubiquitin-dependent mechanism, endosomal sorting complex required for transport (ESCRT), then targets CXCR4 for lysosomal degradation. This process is dependent also on prior Ser-/Thr-phosphorylation in the C-terminal of CXCR4. Also binding of ARRB1 to STAM negatively regulates CXCR4 sorting to lysosomes though modulating ubiquitination of SFR5S. Post-translationally, sulfation is required for efficient binding of CXCL12/SDF-1alpha and promotes its dimerization. O- and N-glycosylated. N-glycosylation can mask coreceptor function. The O-glycosylation chondroitin sulfate attachment does not affect interaction with CXCL12/SDF-1alpha nor its coreceptor activity.

The protein resides in the cell membrane. The protein localises to the cell junction. It localises to the early endosome. Its subcellular location is the late endosome. It is found in the lysosome. Receptor for the C-X-C chemokine CXCL12/SDF-1 that transduces a signal by increasing intracellular calcium ion levels and enhancing MAPK1/MAPK3 activation. Involved in the AKT signaling cascade. Plays a role in regulation of cell migration, e.g. during wound healing. Acts as a receptor for extracellular ubiquitin; leading to enhanced intracellular calcium ions and reduced cellular cAMP levels. Binds bacterial lipopolysaccharide (LPS) et mediates LPS-induced inflammatory response, including TNF secretion by monocytes. Involved in hematopoiesis and in cardiac ventricular septum formation. Also plays an essential role in vascularization of the gastrointestinal tract, probably by regulating vascular branching and/or remodeling processes in endothelial cells. Involved in cerebellar development. In the CNS, could mediate hippocampal-neuron survival. The sequence is that of C-X-C chemokine receptor type 4 (Cxcr4) from Rattus norvegicus (Rat).